Consider the following 559-residue polypeptide: Dihydroxy-acid dehydratase (559 aa).

A [2Fe-2S] cluster-binding site is contributed by C52. Residue D84 coordinates Mg(2+). C125 is a binding site for [2Fe-2S] cluster. Residues D126 and K127 each coordinate Mg(2+). The residue at position 127 (K127) is an N6-carboxylysine. C197 lines the [2Fe-2S] cluster pocket. E447 serves as a coordination point for Mg(2+). The active-site Proton acceptor is S473.

It belongs to the IlvD/Edd family. In terms of assembly, homodimer. [2Fe-2S] cluster is required as a cofactor. The cofactor is Mg(2+).

The enzyme catalyses (2R)-2,3-dihydroxy-3-methylbutanoate = 3-methyl-2-oxobutanoate + H2O. The catalysed reaction is (2R,3R)-2,3-dihydroxy-3-methylpentanoate = (S)-3-methyl-2-oxopentanoate + H2O. The protein operates within amino-acid biosynthesis; L-isoleucine biosynthesis; L-isoleucine from 2-oxobutanoate: step 3/4. It participates in amino-acid biosynthesis; L-valine biosynthesis; L-valine from pyruvate: step 3/4. Functionally, functions in the biosynthesis of branched-chain amino acids. Catalyzes the dehydration of (2R,3R)-2,3-dihydroxy-3-methylpentanoate (2,3-dihydroxy-3-methylvalerate) into 2-oxo-3-methylpentanoate (2-oxo-3-methylvalerate) and of (2R)-2,3-dihydroxy-3-methylbutanoate (2,3-dihydroxyisovalerate) into 2-oxo-3-methylbutanoate (2-oxoisovalerate), the penultimate precursor to L-isoleucine and L-valine, respectively. The protein is Dihydroxy-acid dehydratase of Roseiflexus sp. (strain RS-1).